The chain runs to 306 residues: uncharacterized protein (306 aa).

Residues 40 to 156 (HETCSTPGED…AVASASAPTE (117 aa)) form a disordered region. Residues 64–73 (EGINLGEEGL) show a composition bias toward low complexity. Over residues 129 to 139 (KQHKKAKKRKS) the composition is skewed to basic residues.

This is an uncharacterized protein from Rattus norvegicus (Rat).